The primary structure comprises 2725 residues: Teneurin-1 (2725 aa).

The segment at 1 to 48 is disordered; the sequence is MEQTDCKPYQPLPKVKHEMDLAYTSSSDESEDGRKPRQSYNSRETLHE. Positions 1–318 constitute a Teneurin N-terminal domain; that stretch reads MEQTDCKPYQ…KPYRCCNWKC (318 aa). The Cytoplasmic segment spans residues 1 to 324; the sequence is MEQTDCKPYQ…NWKCTALSAT (324 aa). The short motif at 62-65 is the Nuclear localization signal (NLS) element; sequence RKRK. Ser-105 is modified (phosphoserine). Thr-109 is modified (phosphothreonine). Position 116 is a phosphoserine (Ser-116). Residues 174-189 show a composition bias toward polar residues; the sequence is AGSTQDVQSSPHNQFT. The interval 174 to 241 is disordered; that stretch reads AGSTQDVQSS…PAPPTSTQDS (68 aa). Over residues 192–201 the composition is skewed to pro residues; sequence PLPPPPPPPH. The Required for interaction with SORBS1 (Ten-1 ICD form) signature appears at 290–297; the sequence is PPPRPLPR. A helical membrane pass occupies residues 325–345; sequence AITVTLALLLAYVIAVHLFGL. Topologically, residues 346 to 2725 are extracellular; the sequence is TWQLQPVEGE…FMRQSEIGRR (2380 aa). An N-linked (GlcNAc...) asparagine glycan is attached at Asn-433. EGF-like domains lie at 528–559, 560–591, 592–624, 625–657, 658–691, 692–721, 722–753, and 761–796; these read IMDD…PDCA, RDSC…ECDV, PEEQ…EICE, EEDC…NCET, PLPV…SDCS, TELC…GPTC, EERS…DHCT, and VRDG…TGCN. 22 cysteine pairs are disulfide-bonded: Cys-532–Cys-542, Cys-536–Cys-547, Cys-549–Cys-558, Cys-567–Cys-578, Cys-580–Cys-589, Cys-596–Cys-607, Cys-601–Cys-612, Cys-614–Cys-623, Cys-628–Cys-639, Cys-633–Cys-644, Cys-646–Cys-655, Cys-666–Cys-679, Cys-681–Cys-690, Cys-695–Cys-705, Cys-699–Cys-710, Cys-712–Cys-721, Cys-726–Cys-736, Cys-730–Cys-741, Cys-743–Cys-752, Cys-765–Cys-775, Cys-769–Cys-784, and Cys-786–Cys-795. Residues Asn-905 and Asn-1084 are each glycosylated (N-linked (GlcNAc...) asparagine). NHL repeat units lie at residues 1194–1219, 1292–1336, 1351–1402, 1414–1458, and 1481–1524; these read LFAP…VRRI, SHCG…NAVI, LSCD…IAGR, FLVS…VTTN, and CFSG…ISRN. Residues 1534 to 1553 form a YD 1 repeat; it reads YEIASPADQELYQFTVNGTH. Asn-1550 and Asn-1567 each carry an N-linked (GlcNAc...) asparagine glycan. 4 YD repeats span residues 1570–1590, 1608–1632, 1633–1654, and 1655–1675; these read YNSE…VHIR, YWLT…ALMT, YPGN…TVYE, and YDPE…SSFH. Asn-1663, Asn-1699, Asn-1757, Asn-1781, and Asn-1842 each carry an N-linked (GlcNAc...) asparagine glycan. YD repeat units follow at residues 1845 to 1864, 1865 to 1885, 1886 to 1904, 1905 to 1925, 1933 to 1949, 1950 to 1969, 1970 to 1989, 1992 to 2012, 2015 to 2035, 2085 to 2105, and 2113 to 2133; these read YSPS…EKME, YDQS…WSYT, YLEK…YIFE, YDQP…HSLQ, YRNI…FIQD, YSRD…RRVL, YKYT…TQVT, YEES…FICT, YRQT…EGLV, YDLN…FSAN, and YEIL…VGRM. An N-linked (GlcNAc...) asparagine glycan is attached at Asn-2145. YD repeat units lie at residues 2153-2173, 2174-2194, 2196-2216, 2228-2248, and 2250-2270; these read YDAD…WRYS, YDLN…LTPL, YDLR…DEDG, YNSN…TVQY, and YDGL…LQFF. Asn-2285 carries an N-linked (GlcNAc...) asparagine glycan. YD repeat units lie at residues 2296–2313 and 2314–2337; these read YDLQ…GEEY and YVAC…IKEI. Residue Ser-2580 is modified to Phosphoserine. A glycan (N-linked (GlcNAc...) asparagine) is linked at Asn-2602.

This sequence belongs to the tenascin family. Teneurin subfamily. Homodimer; disulfide-linked. Heterodimer with either TENM2 or TENM3. May also form heterodimer with TENM4. Ten-1 ICD interacts with SORBS1 (via third SH3 domain). Interacts with MBD1. Ten-1 ICD interacts with HINT1. Derives from the plasma membrane form by proteolytic processing. Further proteolytic cleavage may be generated. Expressed in fetal brain.

The protein localises to the cell membrane. The protein resides in the nucleus. It is found in the nucleus speckle. It localises to the nucleus matrix. Its subcellular location is the cytoplasm. The protein localises to the cytoskeleton. Functionally, involved in neural development, regulating the establishment of proper connectivity within the nervous system. May function as a cellular signal transducer. In terms of biological role, plays a role in the regulation of neuroplasticity in the limbic system. Mediates a rapid reorganization of actin- and tubulin-based cytoskeleton elements with an increase in dendritic arborization and spine density formation of neurons in the hippocampus and amygdala. Induces BDNF transcription inhibition in neurons. Activates the mitogen-activated protein (MAP) kinase 2 (MEK2) and extracellular signal-regulated kinase (ERK) cascade. Also acts as a bioactive neuroprotective peptide on limbic neurons of the brain and regulates stress-induced behavior: attenuates alkalosis-associated necrotic cell death and the effects of corticotropin-releasing factor (CRF) on c-fos/FOS induction and on the reinstatement of cocaine seeking. Its function is as follows. Induces gene transcription activation. This is Teneurin-1 (TENM1) from Homo sapiens (Human).